The sequence spans 638 residues: Threonine--tRNA ligase (638 aa).

The TGS domain occupies 1–61 (MPVITLPDGS…EHDARIEIVT (61 aa)). Residues 243–534 (DHRKIAKAQD…LIEEYAGHFP (292 aa)) form a catalytic region. Residues cysteine 334, histidine 385, and histidine 511 each contribute to the Zn(2+) site.

Belongs to the class-II aminoacyl-tRNA synthetase family. As to quaternary structure, homodimer. Zn(2+) is required as a cofactor.

The protein localises to the cytoplasm. The catalysed reaction is tRNA(Thr) + L-threonine + ATP = L-threonyl-tRNA(Thr) + AMP + diphosphate + H(+). Catalyzes the attachment of threonine to tRNA(Thr) in a two-step reaction: L-threonine is first activated by ATP to form Thr-AMP and then transferred to the acceptor end of tRNA(Thr). Also edits incorrectly charged L-seryl-tRNA(Thr). In Idiomarina loihiensis (strain ATCC BAA-735 / DSM 15497 / L2-TR), this protein is Threonine--tRNA ligase.